Reading from the N-terminus, the 776-residue chain is Microtubule-associated protein tau (776 aa).

Over residues 1–26 (MAEPRQEFEVMEDHAGTYGLGDRKDQ) the composition is skewed to basic and acidic residues. Positions 1-591 (MAEPRQEFEV…PVPMPDLKNV (591 aa)) are disordered. Alanine 2 carries the post-translational modification N-acetylalanine. Phosphotyrosine is present on residues tyrosine 18 and tyrosine 29. A Glycyl lysine isopeptide (Lys-Gly) (interchain with G-Cter in ubiquitin) cross-link involves residue lysine 44. Serine 46 and serine 61 each carry phosphoserine. The segment covering 61-71 (SETSDAKSTPT) has biased composition (polar residues). Phosphothreonine is present on residues threonine 69, threonine 71, and threonine 111. 2 stretches are compositionally biased toward basic and acidic residues: residues 179–189 (EGGRHAPELLK) and 207–216 (GGKERPGSKE). Serine 214 is subject to Phosphoserine. Over residues 217–228 (EVDEDRDVDESS) the composition is skewed to acidic residues. Composition is skewed to basic and acidic residues over residues 293 to 303 (KGQDAHLEFTF) and 314 to 323 (EQAHSEEHLG). Over residues 324-340 (RAAFPGAPGEGPEARGP) the composition is skewed to low complexity. Basic and acidic residues-rich tracts occupy residues 344–356 (EDTKEADLPEPSE) and 381–393 (KSKDGTGSDDKKA). Over residues 440–452 (KYVSSVTPRTGSS) the composition is skewed to polar residues. A compositionally biased stretch (basic and acidic residues) spans 455 to 466 (KEMKLKGADGKT). Residue threonine 470 is modified to Phosphothreonine. Arginine 472 carries the omega-N-methylarginine modification. The residue at position 480 (lysine 480) is an N6,N6-dimethyllysine; alternate. At lysine 480 the chain carries N6-acetyllysine; alternate. Phosphothreonine is present on residues threonine 486, threonine 492, and threonine 498. Residues serine 502, serine 526, and serine 530 each carry the phosphoserine modification. Basic and acidic residues predominate over residues 517–528 (RSERGEPPKSGD). The segment covering 529 to 549 (RSGYSSPGSPGTPGSRSRTPS) has biased composition (low complexity). The residue at position 532 (tyrosine 532) is a Phosphotyrosine. Phosphoserine occurs at positions 533, 534, and 537. A phosphothreonine mark is found at threonine 540 and threonine 547. At serine 549 the chain carries Phosphoserine. Threonine 552 carries the phosphothreonine modification. Lysine 560 bears the N6-acetyllysine mark. Residue threonine 566 is modified to Phosphothreonine. 2 positions are modified to phosphoserine: serine 570 and serine 572. Tau/MAP repeat units lie at residues 579–609 (QTAPVPMPDLKNVKSKIGSTENLKHQPGGGK), 610–640 (VQIINKKLDLSNVQSKCGSKDNIKHVPGGGS), 641–671 (VQIVYKPVDLSKVTSKCGSLGNIHHKPGGGQ), and 672–703 (VEVKSEKLDFKDRVQSKIGSLDNITHVPGGGN). Residue lysine 589 forms a Glycyl lysine isopeptide (Lys-Gly) (interchain with G-Cter in ubiquitin) linkage. Position 594 is an N6-acetyllysine; alternate (lysine 594). An N6-methyllysine; alternate modification is found at lysine 594. Residue lysine 594 forms a Glycyl lysine isopeptide (Lys-Gly) (interchain with G-Cter in ubiquitin); alternate linkage. A Phosphoserine modification is found at serine 597. Lysine 602 participates in a covalent cross-link: Glycyl lysine isopeptide (Lys-Gly) (interchain with G-Cter in ubiquitin). Lysine 616 is modified (N6-acetyllysine; alternate). A Glycyl lysine isopeptide (Lys-Gly) (interchain with G-Cter in ubiquitin); alternate cross-link involves residue lysine 616. Serine 620 and serine 624 each carry phosphoserine. N6-acetyllysine is present on lysine 625. Residue serine 628 is modified to Phosphoserine. The residue at position 633 (lysine 633) is an N6-acetyllysine; alternate. Residue lysine 633 forms a Glycyl lysine isopeptide (Lys-Gly) (interchain with G-Cter in ubiquitin); alternate linkage. At serine 640 the chain carries Phosphoserine. Lysine 646 is subject to N6,N6-dimethyllysine; alternate. N6-acetyllysine; alternate occurs at positions 646, 652, and 656. Glycyl lysine isopeptide (Lys-Gly) (interchain with G-Cter in ubiquitin); alternate cross-links involve residues lysine 646, lysine 652, and lysine 656. Residue serine 659 is modified to Phosphoserine. N6-acetyllysine; alternate is present on residues lysine 666, lysine 678, and lysine 682. Residues lysine 666, lysine 678, and lysine 682 each participate in a glycyl lysine isopeptide (Lys-Gly) (interchain with G-Cter in ubiquitin); alternate cross-link. Position 684 is an omega-N-methylarginine (arginine 684). The residue at position 687 (serine 687) is a Phosphoserine. Residue lysine 688 forms a Glycyl lysine isopeptide (Lys-Gly) (interchain with G-Cter in ubiquitin) linkage. Serine 691 carries the post-translational modification Phosphoserine. N6-acetyllysine; alternate is present on lysine 704. A Glycyl lysine isopeptide (Lys-Gly) (interchain with G-Cter in ubiquitin); alternate cross-link involves residue lysine 704. Lysine 710 is covalently cross-linked (Glycyl lysine isopeptide (Lys-Gly) (interchain with G-Cter in ubiquitin)). Lysine 720 is subject to N6-acetyllysine; alternate. A Glycyl lysine isopeptide (Lys-Gly) (interchain with G-Cter in ubiquitin); alternate cross-link involves residue lysine 720. Tyrosine 729 bears the Phosphotyrosine mark. Residues serine 731 and serine 735 each carry the phosphoserine modification. The tract at residues 733-752 (VVSGDTSPRHLSNVSSTGSI) is disordered. Positions 736–751 (GDTSPRHLSNVSSTGS) are enriched in polar residues. At threonine 738 the chain carries Phosphothreonine. 4 positions are modified to phosphoserine: serine 739, serine 744, serine 751, and serine 757. Threonine 762 bears the Phosphothreonine mark.

Interacts with MARK1, MARK2, MARK3 and MARK4. Interacts with SQSTM1 when polyubiquitinated. Interacts with PSMC2 through SQSTM1. Interacts with FKBP4. Binds to CSNK1D. Interacts with SGK1. Interacts with EPM2A; the interaction dephosphorylates MAPT at Ser-396. Interacts with PIN1. Interacts with LRRK2. Interacts with LRP1, leading to endocytosis; this interaction is reduced in the presence of LRPAP1/RAP. In terms of processing, polyubiquitinated. Requires functional TRAF6 and may provoke SQSTM1-dependent degradation by the proteasome. Phosphorylation at various serine and threonine residues in S-P or T-P motifs by proline-directed protein kinases (PDPK1, CDK1, CDK5, GSK3, MAPK) (a few sites per protein in interphase, more in mitosis), and at serine residues in K-X-G-S motifs by MAP/microtubule affinity-regulating kinase (MARK1, MARK2, MARK3 or MARK4), causing detachment from microtubules, and their disassembly. Phosphorylation at Ser-597 by BRSK1 and BRSK2 in neurons affects ability to bind microtubules and plays a role in neuron polarization. Phosphorylated by PHK. Dephosphorylation at several serine and threonine residues by the serine/threonine phosphatase PPP5C. Phosphorylation at Ser-214 by SGK1 mediates microtubule depolymerization and neurite formation in hippocampal neurons.

It localises to the cytoplasm. The protein localises to the cytosol. The protein resides in the cell membrane. Its subcellular location is the cytoskeleton. It is found in the cell projection. It localises to the axon. The protein localises to the dendrite. Functionally, promotes microtubule assembly and stability, and might be involved in the establishment and maintenance of neuronal polarity. The C-terminus binds axonal microtubules while the N-terminus binds neural plasma membrane components, suggesting that tau functions as a linker protein between both. Axonal polarity is predetermined by tau localization (in the neuronal cell) in the domain of the cell body defined by the centrosome. The short isoforms allow plasticity of the cytoskeleton whereas the longer isoforms may preferentially play a role in its stabilization. This Pan troglodytes (Chimpanzee) protein is Microtubule-associated protein tau (MAPT).